A 359-amino-acid chain; its full sequence is Ras association domain-containing protein 7 (359 aa).

A Ras-associating domain is found at 6–89; that stretch reads VAMELKVWVD…VQFVLRRTGP (84 aa). The segment at 87–123 is disordered; sequence TGPSLSGRPSSDNCPPPERCPVRASLPPKPSAIPGRE. Polar residues predominate over residues 89-99; the sequence is PSLSGRPSSDN. Coiled coils occupy residues 180–208 and 242–301; these read WEQE…TAEH and AAER…QQFI. The segment at 339-359 is disordered; that stretch reads SHILVSSLSPEVPPMRQSSWR.

In terms of assembly, interacts with MAP2K7 and GTP-bound NRAS. Post-translationally, polyubiquitinated and degraded by the proteasome upon prolonged stress stimuli.

Its subcellular location is the cytoplasm. It is found in the cytoskeleton. The protein resides in the microtubule organizing center. It localises to the centrosome. In terms of biological role, negatively regulates stress-induced JNK activation and apoptosis by promoting MAP2K7 phosphorylation and inhibiting its ability to activate JNK. Following prolonged stress, anti-apoptotic effect stops because of degradation of RASSF7 protein via the ubiquitin-proteasome pathway. Required for the activation of AURKB and chromosomal congression during mitosis where it stimulates microtubule polymerization. This is Ras association domain-containing protein 7 (Rassf7) from Mus musculus (Mouse).